Here is a 308-residue protein sequence, read N- to C-terminus: MVSDEDELNLLVIVVDANPIWWGKQALKESQFTLSKCIDAVMVLGNSHLFMNRSNKLAVIASHIQESRFLYPGKNGRLGDFFGDPGNPPEFNPSGSKDGKYELLTSANEVIVEEIKDLMTKSDIKGQHTETLLAGSLAKALCYIHRMNKEVKDNQEMKSRILVIKAAEDSALQYMNFMNVIFAAQKQNILIDACVLDSDSGLLQQACDITGGLYLKVPQMPSLLQYLLWVFLPDQDQRSQLILPPPVHVDYRAACFCHRNLIEIGYVCSVCLSIFCNFSPICTTCETAFKISLPPVLKAKKKKLKVSA.

The C4-type zinc finger occupies 268–285; the sequence is CSVCLSIFCNFSPICTTC.

Belongs to the TFB4 family. Part of a TFIID-containing RNA polymerase II pre-initiation complex that is composed of TBP and at least GTF2A1, GTF2A2, GTF2E1, GTF2E2, GTF2F1, GTF2H2, GTF2H3, GTF2H4, GTF2H5, GTF2B, TCEA1, ERCC2, ERCC3, TAF1, TAF2, TAF3, TAF4, TAF5, TAF6, TAF7, TAF8, TAF9, TAF10, TAF11, TAF12 and TAF13. Component of the 7-subunit TFIIH core complex composed of XPB/ERCC3, XPD/ERCC2, GTF2H1, GTF2H2, GTF2H3, GTF2H4 and GTF2H5, which is active in NER. The core complex associates with the 3-subunit CDK-activating kinase (CAK) module composed of CCNH/cyclin H, CDK7 and MNAT1 to form the 10-subunit holoenzyme (holo-TFIIH) active in transcription. Interacts with RARA; the interaction requires prior phosphorylation of RARA on 'Ser-369' which then enhances interaction of RARA with CDK7.

Its subcellular location is the nucleus. In terms of biological role, component of the general transcription and DNA repair factor IIH (TFIIH) core complex, which is involved in general and transcription-coupled nucleotide excision repair (NER) of damaged DNA and, when complexed to CAK, in RNA transcription by RNA polymerase II. In NER, TFIIH acts by opening DNA around the lesion to allow the excision of the damaged oligonucleotide and its replacement by a new DNA fragment. In transcription, TFIIH has an essential role in transcription initiation. When the pre-initiation complex (PIC) has been established, TFIIH is required for promoter opening and promoter escape. Phosphorylation of the C-terminal tail (CTD) of the largest subunit of RNA polymerase II by the kinase module CAK controls the initiation of transcription. The sequence is that of General transcription factor IIH subunit 3 (GTF2H3) from Homo sapiens (Human).